Reading from the N-terminus, the 72-residue chain is Mitotic-spindle organizing protein 1 (72 aa).

It belongs to the MOZART1 family. As to quaternary structure, part of the gamma-tubulin complex.

The protein resides in the cytoplasm. It localises to the cytoskeleton. It is found in the microtubule organizing center. Its subcellular location is the spindle pole body. Functionally, required for gamma-tubulin complex recruitment to the microtubule organizing center (MTOC). This Cryptococcus neoformans var. neoformans serotype D (strain B-3501A) (Filobasidiella neoformans) protein is Mitotic-spindle organizing protein 1.